An 89-amino-acid polypeptide reads, in one-letter code: Small ribosomal subunit protein uS19 (89 aa).

Belongs to the universal ribosomal protein uS19 family.

Functionally, protein S19 forms a complex with S13 that binds strongly to the 16S ribosomal RNA. The sequence is that of Small ribosomal subunit protein uS19 from Azobacteroides pseudotrichonymphae genomovar. CFP2.